A 354-amino-acid chain; its full sequence is Hyaluronan and proteoglycan link protein 1 (354 aa).

Residues 1–9 (MRSLLFLVL) constitute a propeptide that is removed on maturation. Residues 38 to 152 (PRLLVEAEQA…EGLEDDTAVV (115 aa)) enclose the Ig-like V-type domain. Asn56 carries an N-linked (GlcNAc...) asparagine glycan. Intrachain disulfides connect Cys61–Cys139, Cys181–Cys252, Cys205–Cys226, Cys279–Cys349, and Cys304–Cys325. 2 Link domains span residues 159-254 (VVFP…FCFT) and 259-351 (GRFY…YCFR).

Belongs to the HAPLN family.

Its subcellular location is the secreted. The protein localises to the extracellular space. It localises to the extracellular matrix. In terms of biological role, stabilizes the aggregates of proteoglycan monomers with hyaluronic acid in the extracellular cartilage matrix. The sequence is that of Hyaluronan and proteoglycan link protein 1 (Hapln1) from Rattus norvegicus (Rat).